A 423-amino-acid chain; its full sequence is Glycine amidinotransferase, mitochondrial (423 aa).

The N-terminal 43 residues, 1–43 (MLRVRCLRGGSRGAEAVHYIGSRLGRTLTGWVQRTFQSTQAAT), are a transit peptide targeting the mitochondrion. 2 positions are modified to phosphoserine: S46 and S49. D170 contributes to the arginine binding site. Catalysis depends on residues D254 and H303. Residues D305, R322, S354, and S355 each contribute to the arginine site. K385 is modified (N6-acetyllysine). The Amidino-cysteine intermediate role is filled by C407.

Belongs to the amidinotransferase family. In terms of assembly, homodimer. There is an equilibrium between the monomeric and dimeric forms, shifted towards the side of the monomer. As to expression, expressed in brain, heart, kidney, liver, lung, salivary gland and skeletal muscle tissue, with the highest expression in kidney. Biallelically expressed in placenta and fetal tissues.

It localises to the mitochondrion inner membrane. Its subcellular location is the cytoplasm. It catalyses the reaction L-arginine + glycine = guanidinoacetate + L-ornithine. The enzyme catalyses 4-aminobutanoate + L-arginine = 4-guanidinobutanoate + L-ornithine. It carries out the reaction beta-alanine + L-arginine = 3-guanidinopropanoate + L-ornithine. The catalysed reaction is taurine + L-arginine = taurocyamine + L-ornithine. The protein operates within amine and polyamine biosynthesis; creatine biosynthesis; creatine from L-arginine and glycine: step 1/2. Transamidinase that catalyzes the transfer of the amidino group of L-arginine onto the amino moiety of acceptor metabolites such as glycine, beta-alanine, gamma-aminobutyric acid (GABA) and taurine yielding the corresponding guanidine derivatives. Catalyzes the rate-limiting step of creatine biosynthesis, namely the transfer of the amidino group from L-arginine to glycine to generate guanidinoacetate, which is then methylated by GAMT to form creatine. Provides creatine as a source for ATP generation in tissues with high energy demands, in particular skeletal muscle, heart and brain. The sequence is that of Glycine amidinotransferase, mitochondrial (GATM) from Homo sapiens (Human).